The primary structure comprises 644 residues: Exoribonuclease 2 (644 aa).

The RNB domain occupies 189-516 (REDLTALNFV…NHRLLKAIIA (328 aa)). The region spanning 561-643 (DERFNAEIID…ETRSVIARPA (83 aa)) is the S1 motif domain.

It belongs to the RNR ribonuclease family. RNase II subfamily.

Its subcellular location is the cytoplasm. It carries out the reaction Exonucleolytic cleavage in the 3'- to 5'-direction to yield nucleoside 5'-phosphates.. Functionally, involved in mRNA degradation. Hydrolyzes single-stranded polyribonucleotides processively in the 3' to 5' direction. The chain is Exoribonuclease 2 from Serratia proteamaculans (strain 568).